The following is a 156-amino-acid chain: MKIIEGNLSLKGDEKIAIINARFNHIITDRLVEGAKDAFLRHGGKEENLSLILVPGAFEIPFALKQACESKKFDGICCVGAVIRGSTPHFDYVAAETTKGIASVGLGANVPVSFGVLTTDTLEQAIERAGSKAGNKGFEAMLTVVEMLNLIQKIKA.

Residues F23, 57–59, and 81–83 contribute to the 5-amino-6-(D-ribitylamino)uracil site; these read AFE and AVI. (2S)-2-hydroxy-3-oxobutyl phosphate is bound at residue 86 to 87; that stretch reads ST. The Proton donor role is filled by H89. Residue F114 participates in 5-amino-6-(D-ribitylamino)uracil binding. (2S)-2-hydroxy-3-oxobutyl phosphate is bound at residue R128.

It belongs to the DMRL synthase family.

The enzyme catalyses (2S)-2-hydroxy-3-oxobutyl phosphate + 5-amino-6-(D-ribitylamino)uracil = 6,7-dimethyl-8-(1-D-ribityl)lumazine + phosphate + 2 H2O + H(+). Its pathway is cofactor biosynthesis; riboflavin biosynthesis; riboflavin from 2-hydroxy-3-oxobutyl phosphate and 5-amino-6-(D-ribitylamino)uracil: step 1/2. In terms of biological role, catalyzes the formation of 6,7-dimethyl-8-ribityllumazine by condensation of 5-amino-6-(D-ribitylamino)uracil with 3,4-dihydroxy-2-butanone 4-phosphate. This is the penultimate step in the biosynthesis of riboflavin. This is 6,7-dimethyl-8-ribityllumazine synthase from Campylobacter lari (strain RM2100 / D67 / ATCC BAA-1060).